The chain runs to 245 residues: Lactate utilization protein A (245 aa).

The protein belongs to the LutA/YkgE family.

Functionally, is involved in L-lactate degradation and allows cells to grow with lactate as the sole carbon source. The sequence is that of Lactate utilization protein A from Exiguobacterium sp. (strain ATCC BAA-1283 / AT1b).